The chain runs to 667 residues: Acetoacetyl-CoA synthetase (667 aa).

The protein belongs to the ATP-dependent AMP-binding enzyme family.

It localises to the cytoplasm. The protein localises to the cytosol. The enzyme catalyses acetoacetate + ATP + CoA = acetoacetyl-CoA + AMP + diphosphate. Functionally, converts acetoacetate to acetoacetyl-CoA in the cytosol. Ketone body-utilizing enzyme, responsible for the synthesis of cholesterol and fatty acids. This Gallus gallus (Chicken) protein is Acetoacetyl-CoA synthetase (AACS).